The primary structure comprises 283 residues: Large ribosomal subunit protein uL2 (283 aa).

The disordered stretch occupies residues 215-283 (RHKGIRPTVR…IRGRKKRINN (69 aa)). Basic residues predominate over residues 274 to 283 (IRGRKKRINN).

It belongs to the universal ribosomal protein uL2 family. Part of the 50S ribosomal subunit. Forms a bridge to the 30S subunit in the 70S ribosome.

In terms of biological role, one of the primary rRNA binding proteins. Required for association of the 30S and 50S subunits to form the 70S ribosome, for tRNA binding and peptide bond formation. It has been suggested to have peptidyltransferase activity; this is somewhat controversial. Makes several contacts with the 16S rRNA in the 70S ribosome. The polypeptide is Large ribosomal subunit protein uL2 (Mycoplasma mobile (strain ATCC 43663 / 163K / NCTC 11711) (Mesomycoplasma mobile)).